Consider the following 432-residue polypeptide: Adenylosuccinate synthetase (432 aa).

GTP contacts are provided by residues 12–18 (GDEGKGK) and 40–42 (GHT). The active-site Proton acceptor is the Asp13. Mg(2+) is bound by residues Asp13 and Gly40. Residues 13 to 16 (DEGK), 38 to 41 (NAGH), Thr132, Arg146, Gln226, Thr241, and Arg305 contribute to the IMP site. Residue His41 is the Proton donor of the active site. 301–307 (TVTGRKR) is a substrate binding site. GTP-binding positions include Arg307, 333-335 (KLD), and 415-417 (STS).

This sequence belongs to the adenylosuccinate synthetase family. In terms of assembly, homodimer. It depends on Mg(2+) as a cofactor.

Its subcellular location is the cytoplasm. The enzyme catalyses IMP + L-aspartate + GTP = N(6)-(1,2-dicarboxyethyl)-AMP + GDP + phosphate + 2 H(+). It participates in purine metabolism; AMP biosynthesis via de novo pathway; AMP from IMP: step 1/2. Its function is as follows. Plays an important role in the de novo pathway of purine nucleotide biosynthesis. Catalyzes the first committed step in the biosynthesis of AMP from IMP. This is Adenylosuccinate synthetase from Agrobacterium fabrum (strain C58 / ATCC 33970) (Agrobacterium tumefaciens (strain C58)).